The sequence spans 149 residues: SsrA-binding protein (149 aa).

This sequence belongs to the SmpB family.

It localises to the cytoplasm. Required for rescue of stalled ribosomes mediated by trans-translation. Binds to transfer-messenger RNA (tmRNA), required for stable association of tmRNA with ribosomes. tmRNA and SmpB together mimic tRNA shape, replacing the anticodon stem-loop with SmpB. tmRNA is encoded by the ssrA gene; the 2 termini fold to resemble tRNA(Ala) and it encodes a 'tag peptide', a short internal open reading frame. During trans-translation Ala-aminoacylated tmRNA acts like a tRNA, entering the A-site of stalled ribosomes, displacing the stalled mRNA. The ribosome then switches to translate the ORF on the tmRNA; the nascent peptide is terminated with the 'tag peptide' encoded by the tmRNA and targeted for degradation. The ribosome is freed to recommence translation, which seems to be the essential function of trans-translation. The protein is SsrA-binding protein of Acholeplasma laidlawii (strain PG-8A).